A 582-amino-acid chain; its full sequence is Pineapple eye protein (582 aa).

Residues 6–44 (ELQCLICKYSDTDDLVFGEWMIVRNLQVHYFCLLLSTHL) form a C2HC pre-PHD-type zinc finger. The segment at 6–119 (ELQCLICKYS…QYKSYCYKCR (114 aa)) is extended PHD domain (ePHD). The segment at 72–119 (RKCWYCNKIGASLQCDRCRSLFHLKCGLENRAVFEFCGQYKSYCYKCR) adopts a PHD-type; atypical zinc-finger fold. 2 disordered regions span residues 292 to 311 (PART…DGSF) and 323 to 422 (RSLT…ASEI). Polar residues predominate over residues 340-363 (SSNITVIFSQPKSNATSERLSLSP). The segment covering 383 to 399 (SIDENHSPQPIARRDTS) has biased composition (basic and acidic residues).

Required for survival of imaginal disk cells possibly by regulation of cell apoptosis. Required for germline stem cell self-renewal through mediation of BMP signaling. The polypeptide is Pineapple eye protein (Drosophila melanogaster (Fruit fly)).